Reading from the N-terminus, the 488-residue chain is Annexin A7 (488 aa).

The span at 1–18 shows a compositional bias: pro residues; that stretch reads MSYPGYPPTGYPPFPGYP. 2 disordered regions span residues 1 to 49 and 71 to 143; these read MSYP…YPQV and GYPG…PTYP. The tract at residues 1–143 is repeat-rich region; sequence MSYPGYPPTG…QYPGGQPTYP (143 aa). Residues 5–20 are 3 X 5 AA tandem repeats of G-Y-P-P-X; sequence GYPPTGYPPFPGYPPA. Gly residues predominate over residues 89-102; sequence PGQGFGVPPGGAGF. Annexin repeat units lie at residues 185-256, 257-328, 340-412, and 416-487; these read FDAI…ALFM, PPTY…SMCQ, QMAQ…TILQ, and NRPA…AIVG. K233 carries the post-translational modification N6-acetyllysine.

It belongs to the annexin family. Interacts with PDCD6. As to expression, isoform 1 is expressed in brain, heart and skeletal muscle. Isoform 2 is more abundant in liver, lung, kidney, spleen, fibroblasts and placenta.

Calcium/phospholipid-binding protein which promotes membrane fusion and is involved in exocytosis. In Homo sapiens (Human), this protein is Annexin A7 (ANXA7).